We begin with the raw amino-acid sequence, 237 residues long: CD99 antigen-like protein 2 (237 aa).

An N-terminal signal peptide occupies residues Met1 to Gly25. Topologically, residues Asp26–Gly161 are extracellular. The tract at residues Asp47 to Ser157 is disordered. Low complexity-rich tracts occupy residues Thr51–Ala66 and Thr74–Arg84. A compositionally biased stretch (basic and acidic residues) spans Asp102–Lys111. Ser154 is a glycosylation site (O-linked (Xyl...) (chondroitin sulfate) serine). A helical membrane pass occupies residues Thr162 to Ile182. Over Ser183–Ile237 the chain is Cytoplasmic. A compositionally biased stretch (polar residues) spans Thr218 to Ala227. A disordered region spans residues Thr218 to Ile237. A compositionally biased stretch (pro residues) spans Glu228–Ile237.

It belongs to the CD99 family. In terms of processing, O-glycosylated. Highly expressed in the nervous system, including brain, dentate nucleus of hippocampus, granular and Purkinje cells of cerebellum, brain stem nucleus and choroid plexus. Expressed in peripheral blood T- and B-cells and neutrophils (at protein level). Almost undetectable in bone marrow-derived neutrophils (at protein level). Also expressed in thymocytes (at protein level) with higher expression in cortical thymocytes than in medullary thymocytes. Expressed at high levels in testis (mostly in germ cells and Sertoli cells) and ovary (mostly in granulosa cells). Expressed in lung, heart, kidney and liver (at protein level); however, expression in heart, kidney and liver seems restricted to endothelial cells (at protein level). Highly expressed in endothelial cells and to a lower level in vascular smooth muscle cells (at protein level). Low expression in spleen.

The protein localises to the cell membrane. The protein resides in the cell junction. It is found in the secreted. In terms of biological role, plays a role in a late step of leukocyte extravasation helping cells to overcome the endothelial basement membrane. Acts at the same site as, but independently of, PECAM1. Homophilic adhesion molecule, but these interactions may not be required for cell aggregation. In Mus musculus (Mouse), this protein is CD99 antigen-like protein 2 (Cd99l2).